A 256-amino-acid polypeptide reads, in one-letter code: Trans-aconitate 2-methyltransferase (256 aa).

It belongs to the methyltransferase superfamily. Tam family.

It localises to the cytoplasm. It carries out the reaction trans-aconitate + S-adenosyl-L-methionine = (E)-3-(methoxycarbonyl)pent-2-enedioate + S-adenosyl-L-homocysteine. Its function is as follows. Catalyzes the S-adenosylmethionine monomethyl esterification of trans-aconitate. In Rhodopseudomonas palustris (strain BisB18), this protein is Trans-aconitate 2-methyltransferase.